A 388-amino-acid polypeptide reads, in one-letter code: Acetate kinase (388 aa).

N7 contributes to the Mg(2+) binding site. An ATP-binding site is contributed by K14. R76 contributes to the substrate binding site. Residue D133 is the Proton donor/acceptor of the active site. ATP is bound by residues 193–197 (HLGNG), 267–269 (DMR), and 315–319 (GIGEN). E374 lines the Mg(2+) pocket.

Belongs to the acetokinase family. Homodimer. The cofactor is Mg(2+). Requires Mn(2+) as cofactor.

The protein localises to the cytoplasm. It catalyses the reaction acetate + ATP = acetyl phosphate + ADP. Its pathway is metabolic intermediate biosynthesis; acetyl-CoA biosynthesis; acetyl-CoA from acetate: step 1/2. In terms of biological role, catalyzes the formation of acetyl phosphate from acetate and ATP. Can also catalyze the reverse reaction. This is Acetate kinase from Micrococcus luteus (strain ATCC 4698 / DSM 20030 / JCM 1464 / CCM 169 / CCUG 5858 / IAM 1056 / NBRC 3333 / NCIMB 9278 / NCTC 2665 / VKM Ac-2230) (Micrococcus lysodeikticus).